A 1708-amino-acid chain; its full sequence is 187-kDa microtubule-associated protein AIR9 (1708 aa).

A compositionally biased stretch (polar residues) spans 67–93; it reads SSLRVSGTTPVTIRRNSTGGVTENLAG. Residues 67–255 form a disordered region; the sequence is SSLRVSGTTP…KTSTPESRDS (189 aa). The span at 110–121 shows a compositional bias: basic and acidic residues; it reads DPVRRSLPELRK. The span at 122-134 shows a compositional bias: low complexity; sequence SSVSSLSAKTVSK. Positions 149 to 165 are enriched in polar residues; the sequence is GSRSLTKSTGFSLSKPE. Residues 173-234 show a composition bias toward low complexity; sequence SVSVSSKRAP…SIRSKSFSSP (62 aa). LRR repeat units lie at residues 267 to 290, 291 to 315, 316 to 335, 337 to 359, 360 to 382, 384 to 402, and 403 to 425; these read AGDDMRLDLRGHRIRSLTSGGLHL, SPNLEFVYLRDNLLSTLEGIEILNR, VKVLDLSFNDFKGPGFEPLE, CKMLQQLYLAGNQITSLASLPQL, PNLEFLSVAQNKLKSLAMASQPR, QVLAASKNKITTLKDFPYL, and PVLEHLRVEENPLLKISHLEAAS. A9 repeat units lie at residues 489–584, 601–682, 698–777, 793–878, 895–977, 994–1073, 1090–1167, 1183–1272, 1287–1365, 1382–1473, and 1489–1569; these read PSGY…FAIS, LNGE…QYKY, ITGD…VSTS, IVGD…VYVL, ITGD…RSCM, VVGA…AISE, FLGS…RSIR, IPDC…VVVI, VRVK…KMSE, FTGK…AYAE, and IEGQ…VSAS.

As to quaternary structure, interacts with KCBP. In terms of tissue distribution, strongly expressed in dividing cells, like the meristemic region of the root tip.

The protein localises to the cytoplasm. Its subcellular location is the cell cortex. It is found in the cytoskeleton. It localises to the phragmoplast. Functionally, microtubule-associated protein that may be involved in the maturation of cell plates and proper insertion of cross-walls after cytokinesis. This Arabidopsis thaliana (Mouse-ear cress) protein is 187-kDa microtubule-associated protein AIR9.